The chain runs to 378 residues: Dihydroorotate dehydrogenase (quinone) (378 aa).

FMN-binding positions include 79–83 (PGYDK) and T103. Residue K83 coordinates substrate. Residue 128–132 (NRMGF) participates in substrate binding. FMN is bound by residues N160 and N193. N193 contributes to the substrate binding site. S196 functions as the Nucleophile in the catalytic mechanism. Residue N198 coordinates substrate. Residues K231 and T259 each coordinate FMN. Residue 260–261 (NT) coordinates substrate. Residues G289, G318, and 339–340 (YT) each bind FMN.

This sequence belongs to the dihydroorotate dehydrogenase family. Type 2 subfamily. As to quaternary structure, monomer. Requires FMN as cofactor.

The protein localises to the cell membrane. It catalyses the reaction (S)-dihydroorotate + a quinone = orotate + a quinol. It participates in pyrimidine metabolism; UMP biosynthesis via de novo pathway; orotate from (S)-dihydroorotate (quinone route): step 1/1. Functionally, catalyzes the conversion of dihydroorotate to orotate with quinone as electron acceptor. This Trichodesmium erythraeum (strain IMS101) protein is Dihydroorotate dehydrogenase (quinone).